The primary structure comprises 133 residues: Ribonuclease P protein component (133 aa).

Belongs to the RnpA family. In terms of assembly, consists of a catalytic RNA component (M1 or rnpB) and a protein subunit.

The catalysed reaction is Endonucleolytic cleavage of RNA, removing 5'-extranucleotides from tRNA precursor.. RNaseP catalyzes the removal of the 5'-leader sequence from pre-tRNA to produce the mature 5'-terminus. It can also cleave other RNA substrates such as 4.5S RNA. The protein component plays an auxiliary but essential role in vivo by binding to the 5'-leader sequence and broadening the substrate specificity of the ribozyme. The polypeptide is Ribonuclease P protein component (Pseudomonas savastanoi pv. phaseolicola (strain 1448A / Race 6) (Pseudomonas syringae pv. phaseolicola (strain 1448A / Race 6))).